A 348-amino-acid polypeptide reads, in one-letter code: Protein RecA (348 aa).

65–72 (GPESSGKT) contacts ATP. The interval 328–348 (SKPQAETSARLATQEELADDY) is disordered.

Belongs to the RecA family.

It is found in the cytoplasm. Can catalyze the hydrolysis of ATP in the presence of single-stranded DNA, the ATP-dependent uptake of single-stranded DNA by duplex DNA, and the ATP-dependent hybridization of homologous single-stranded DNAs. It interacts with LexA causing its activation and leading to its autocatalytic cleavage. This chain is Protein RecA, found in Ectopseudomonas oleovorans (Pseudomonas oleovorans).